A 99-amino-acid polypeptide reads, in one-letter code: Large ribosomal subunit protein bL27 (99 aa).

Residues 1 to 9 (MLIMNLQLF) constitute a propeptide that is removed on maturation.

This sequence belongs to the bacterial ribosomal protein bL27 family. In terms of processing, the N-terminus is cleaved by ribosomal processing cysteine protease Prp.

The sequence is that of Large ribosomal subunit protein bL27 from Clostridium beijerinckii (strain ATCC 51743 / NCIMB 8052) (Clostridium acetobutylicum).